We begin with the raw amino-acid sequence, 301 residues long: MSSNIEPQTTAKCILYTTKGNIAIELWAKECPETCKRFLSMLSDGTFTNGEFKELKPTQWLMFNANSTGEYRTVAEEKNPRIRFNRDGLLGWDRRRNTWFITVLADSKHVLNDCNVFGKIVGKSIYIFREILGGEIEASSRDNDVKRFMYPAVLKDVEITIPFFEDIFGSKRRLEDNEKKEQEPAKKLVKSAKVKMVYEDEQEDDDGDVQKLKPRKRMILPAWIKDDSRSEGIKLDASLDQPQEALIREKTELHDNVDEATTKETESQENIKEEPMDKRERETLAMLSKFQERIKNKNILK.

The region spanning 9-159 is the PPIase cyclophilin-type domain; sequence TTAKCILYTT…YPAVLKDVEI (151 aa). The interval 251 to 280 is disordered; the sequence is TELHDNVDEATTKETESQENIKEEPMDKRE.

It belongs to the cyclophilin-type PPIase family. CWC27 subfamily. As to quaternary structure, belongs to the CWC complex (or CEF1-associated complex), a spliceosome subcomplex composed of the U2, U5 and U6 snRNAs and at least BUD13, BUD31, BRR2, CDC40, CEF1, CLF1, CUS1, CWC2, CWC15, CWC21, CWC22, CWC23, CWC24, CWC25, CWC27, ECM2, HSH155, IST3, ISY1, LEA1, MSL1, NTC20, PRP8, PRP9, PRP11, PRP19, PRP21, PRP22, PRP45, PRP46, SLU7, SMB1, SMD1, SMD2, SMD3, SMX2, SMX3, SNT309, SNU114, SPP2, SYF1, SYF2, RSE1 and YJU2.

It localises to the cytoplasm. The protein resides in the nucleus. The enzyme catalyses [protein]-peptidylproline (omega=180) = [protein]-peptidylproline (omega=0). PPIases accelerate the folding of proteins. Catalyzes the cis-trans isomerization of proline imidic peptide bonds in oligopeptides. Involved in pre-mRNA splicing. This chain is Peptidyl-prolyl isomerase CWC27 (CWC27), found in Saccharomyces cerevisiae (strain ATCC 204508 / S288c) (Baker's yeast).